We begin with the raw amino-acid sequence, 563 residues long: F-box/kelch-repeat protein At5g42360 (563 aa).

Residues 129–175 form the F-box domain; sequence YRKHVYLPDDILEMCLMRLPLTSLLNAHLVCKKWQSMANTQRFLQMR. Kelch repeat units lie at residues 184-231, 232-282, and 355-402; these read WLFL…SIHE, EIYI…ATEV, and VLIA…IICN.

The polypeptide is F-box/kelch-repeat protein At5g42360 (Arabidopsis thaliana (Mouse-ear cress)).